Here is a 193-residue protein sequence, read N- to C-terminus: CASP-like protein 1D1 (193 aa).

The interval 1-24 is disordered; the sequence is MGYETKSTLDTERSTAPGTGTTTK. The Cytoplasmic segment spans residues 1–30; it reads MGYETKSTLDTERSTAPGTGTTTKSCSMTQ. Positions 14–24 are enriched in polar residues; the sequence is STAPGTGTTTK. A helical membrane pass occupies residues 31-51; sequence VVLRFVLFAATLTSIVVMVTS. Residues 52–76 are Extracellular-facing; that stretch reads KQTKNIFLPGTPIRIPAAEFTNSPA. Residues 77–97 traverse the membrane as a helical segment; that stretch reads LIYFVVALSVACFYSIVSTFV. Topologically, residues 98-108 are cytoplasmic; sequence TVSAFKKHSCS. The helical transmembrane segment at 109–129 threads the bilayer; it reads AVLLLNLAIMDAVMVGIVASA. The Extracellular portion of the chain corresponds to 130 to 162; the sequence is TGAGGGVAYLGLKGNKEVRWGKICHIYDKFCRH. Residues 163-183 form a helical membrane-spanning segment; it reads VGGAIAVSLFASVVLLLLSII. Over 184-193 the chain is Cytoplasmic; the sequence is SVLSLYKKIR.

The protein belongs to the Casparian strip membrane proteins (CASP) family. As to quaternary structure, homodimer and heterodimers.

Its subcellular location is the cell membrane. This Arabidopsis thaliana (Mouse-ear cress) protein is CASP-like protein 1D1.